The following is a 360-amino-acid chain: Phospho-N-acetylmuramoyl-pentapeptide-transferase (360 aa).

10 consecutive transmembrane segments (helical) span residues 26–46 (AIVS…RMIA), 72–92 (PTMG…LWAY), 94–114 (SNPY…IGFV), 132–152 (WKYF…YLAG), 168–188 (VMPQ…VGTG), 199–219 (GLAI…AWAT), 236–256 (AGEL…FLWF), 263–283 (VFMG…IAVL), 288–308 (FLLV…ILQV), and 338–358 (VIVR…ATLK).

This sequence belongs to the glycosyltransferase 4 family. MraY subfamily. Mg(2+) is required as a cofactor.

The protein localises to the cell inner membrane. The enzyme catalyses UDP-N-acetyl-alpha-D-muramoyl-L-alanyl-gamma-D-glutamyl-meso-2,6-diaminopimeloyl-D-alanyl-D-alanine + di-trans,octa-cis-undecaprenyl phosphate = di-trans,octa-cis-undecaprenyl diphospho-N-acetyl-alpha-D-muramoyl-L-alanyl-D-glutamyl-meso-2,6-diaminopimeloyl-D-alanyl-D-alanine + UMP. It functions in the pathway cell wall biogenesis; peptidoglycan biosynthesis. Its function is as follows. Catalyzes the initial step of the lipid cycle reactions in the biosynthesis of the cell wall peptidoglycan: transfers peptidoglycan precursor phospho-MurNAc-pentapeptide from UDP-MurNAc-pentapeptide onto the lipid carrier undecaprenyl phosphate, yielding undecaprenyl-pyrophosphoryl-MurNAc-pentapeptide, known as lipid I. The chain is Phospho-N-acetylmuramoyl-pentapeptide-transferase from Klebsiella pneumoniae subsp. pneumoniae (strain ATCC 700721 / MGH 78578).